The following is a 182-amino-acid chain: Adenine phosphoribosyltransferase (182 aa).

Belongs to the purine/pyrimidine phosphoribosyltransferase family. In terms of assembly, homodimer.

The protein resides in the cytoplasm. The catalysed reaction is AMP + diphosphate = 5-phospho-alpha-D-ribose 1-diphosphate + adenine. It functions in the pathway purine metabolism; AMP biosynthesis via salvage pathway; AMP from adenine: step 1/1. Its function is as follows. Catalyzes a salvage reaction resulting in the formation of AMP, that is energically less costly than de novo synthesis. This is Adenine phosphoribosyltransferase from Campylobacter jejuni subsp. jejuni serotype O:23/36 (strain 81-176).